The sequence spans 242 residues: ATP synthase subunit a (242 aa).

A run of 6 helical transmembrane segments spans residues 29–49, 84–104, 114–134, 140–160, 181–201, and 203–223; these read SSIYMLLASILALTYFYLAFY, FIPLVFSLFIFVLFSNLLGMT, IIVTFTLAIIVFLTVTIVGFV, FLTLFLPYGTPLWLAPLMIVI, MAGHVLLKVIAGFTVSLMIYL, and FLPIPIIVILIGFEIFVAILQ.

The protein belongs to the ATPase A chain family. F-type ATPases have 2 components, CF(1) - the catalytic core - and CF(0) - the membrane proton channel. CF(1) has five subunits: alpha(3), beta(3), gamma(1), delta(1), epsilon(1). CF(0) has three main subunits: a(1), b(2) and c(9-12). The alpha and beta chains form an alternating ring which encloses part of the gamma chain. CF(1) is attached to CF(0) by a central stalk formed by the gamma and epsilon chains, while a peripheral stalk is formed by the delta and b chains.

It localises to the cell inner membrane. Key component of the proton channel; it plays a direct role in the translocation of protons across the membrane. The chain is ATP synthase subunit a from Rickettsia akari (strain Hartford).